We begin with the raw amino-acid sequence, 822 residues long: Tubulin polyglutamylase TTLL6 (822 aa).

Residues 1 to 24 form a disordered region; sequence MLQCLTSESEEGAEEREESSTEDL. Residues 8–24 show a composition bias toward acidic residues; that stretch reads ESEEGAEEREESSTEDL. A TTL domain is found at 57–400; it reads KKRLVINLSN…GNCDKKKVLE (344 aa). ATP is bound by residues K174, 180-181, 202-205, and 215-217; these read QG, QLYI, and KFD. Position 180 (Q180) interacts with a protein. Residue R241 participates in L-glutamate binding. 263–264 is a binding site for ATP; sequence TN. L-glutamate contacts are provided by Y265, S266, and K283. The Mg(2+) site is built by D346, E359, and N361. Position 362 (H362) interacts with a protein. The interval 371–450 is c-MTBD region; the sequence is KLDKEVKDSL…CGGFRLIYPG (80 aa). K377 contacts L-glutamate. 2 disordered regions span residues 736–772 and 791–822; these read PLFP…SVFV and TQAR…TATA. The span at 802 to 814 shows a compositional bias: polar residues; sequence SHSGTTTRDSSTQ.

Belongs to the tubulin--tyrosine ligase family. Found in a complex with CEP41. The cofactor is Mg(2+). Highly expressed in testis. Expressed in brain, heart, kidney, liver, lung, muscle and trachea. In the brain, specifically expressed in ependymal cilia.

It is found in the cytoplasm. Its subcellular location is the cytoskeleton. The protein resides in the cilium axoneme. The protein localises to the cilium basal body. The enzyme catalyses L-glutamyl-[protein] + L-glutamate + ATP = gamma-L-glutamyl-L-glutamyl-[protein] + ADP + phosphate + H(+). The catalysed reaction is (L-glutamyl)(n)-gamma-L-glutamyl-L-glutamyl-[protein] + L-glutamate + ATP = (L-glutamyl)(n+1)-gamma-L-glutamyl-L-glutamyl-[protein] + ADP + phosphate + H(+). Its function is as follows. Polyglutamylase which modifies both tubulin and non-tubulin proteins, generating alpha-linked polyglutamate side chains on the gamma-carboxyl group of specific glutamate residues of target proteins. Preferentially mediates ATP-dependent long polyglutamate chain elongation over the initiation step of the polyglutamylation reaction. Preferentially modifies the alpha-tubulin tail over a beta-tail. Promotes tubulin polyglutamylation which stimulates spastin/SPAST-mediated microtubule severing, thereby regulating microtubule functions. Mediates microtubule polyglutamylation in primary cilia axoneme which is important for ciliary structural formation and motility. Mediates microtubule polyglutamylation in motile cilia, necessary for the regulation of ciliary coordinated beating. Polyglutamylates non-tubulin protein nucleotidyltransferase CGAS, leading to CGAS DNA-binding inhibition, thereby preventing antiviral defense response. This chain is Tubulin polyglutamylase TTLL6, found in Mus musculus (Mouse).